Consider the following 464-residue polypeptide: Citrate synthase, mitochondrial (464 aa).

The N-terminal 27 residues, 1-27 (MALLTAAARLFGAKNASCLVLAARHAS), are a transit peptide targeting the mitochondrion. The SIFI-degron signature appears at 2–21 (ALLTAAARLFGAKNASCLVL). Lysine 76 is subject to N6-acetyllysine; alternate. Lysine 76 is modified (N6-succinyllysine; alternate). Lysine 103 and lysine 193 each carry N6-succinyllysine. The residue at position 226 (serine 226) is a Phosphoserine. Residue histidine 301 is part of the active site. An N6-acetyllysine; alternate mark is found at lysine 321 and lysine 327. 2 positions are modified to N6-succinyllysine; alternate: lysine 321 and lysine 327. The active site involves histidine 347. Arginine 356 contacts oxaloacetate. Position 375 is an N6-acetyllysine; alternate (lysine 375). Lysine 375 is subject to N6-succinyllysine; alternate. Lysine 382 carries the post-translational modification N6-acetyllysine. Lysine 393 is subject to N6-acetyllysine; alternate. Residue lysine 393 is modified to N6-succinyllysine; alternate. Position 395 is an N6,N6,N6-trimethyllysine (lysine 395). The active site involves aspartate 402. 2 residues coordinate oxaloacetate: arginine 428 and arginine 448. Lysine 450 is subject to N6-succinyllysine. Lysine 459 is subject to N6-acetyllysine; alternate. Residue lysine 459 is modified to N6-succinyllysine; alternate.

The protein belongs to the citrate synthase family. Homodimer. In terms of processing, methylated. Trimethylation at Lys-395 by CSKMT decreases citrate synthase activity. Post-translationally, in response to mitochondrial stress, the precursor protein is ubiquitinated by the SIFI complex in the cytoplasm before mitochondrial import, leading to its degradation. Within the SIFI complex, UBR4 initiates ubiquitin chain that are further elongated or branched by KCMF1.

Its subcellular location is the mitochondrion matrix. It carries out the reaction oxaloacetate + acetyl-CoA + H2O = citrate + CoA + H(+). Its pathway is carbohydrate metabolism; tricarboxylic acid cycle; isocitrate from oxaloacetate: step 1/2. Its function is as follows. Key enzyme of the Krebs tricarboxylic acid cycle which catalyzes the synthesis of citrate from acetyl coenzyme A and oxaloacetate. This chain is Citrate synthase, mitochondrial (CS), found in Sus scrofa (Pig).